The chain runs to 77 residues: Putative antitoxin VapB3 (77 aa).

The protein belongs to the UPF0330 family.

In terms of biological role, possibly the antitoxin component of a type II toxin-antitoxin (TA) system. Its cognate toxin is VapC3 (Potential). The sequence is that of Putative antitoxin VapB3 (vapB3) from Methanocaldococcus jannaschii (strain ATCC 43067 / DSM 2661 / JAL-1 / JCM 10045 / NBRC 100440) (Methanococcus jannaschii).